The chain runs to 448 residues: Methylenetetrahydrofolate--tRNA-(uracil-5-)-methyltransferase TrmFO (448 aa).

Position 13–18 (13–18 (GAGLAG)) interacts with FAD.

This sequence belongs to the MnmG family. TrmFO subfamily. FAD serves as cofactor.

It localises to the cytoplasm. It catalyses the reaction uridine(54) in tRNA + (6R)-5,10-methylene-5,6,7,8-tetrahydrofolate + NADH + H(+) = 5-methyluridine(54) in tRNA + (6S)-5,6,7,8-tetrahydrofolate + NAD(+). It carries out the reaction uridine(54) in tRNA + (6R)-5,10-methylene-5,6,7,8-tetrahydrofolate + NADPH + H(+) = 5-methyluridine(54) in tRNA + (6S)-5,6,7,8-tetrahydrofolate + NADP(+). Functionally, catalyzes the folate-dependent formation of 5-methyl-uridine at position 54 (M-5-U54) in all tRNAs. The sequence is that of Methylenetetrahydrofolate--tRNA-(uracil-5-)-methyltransferase TrmFO from Streptococcus pyogenes serotype M6 (strain ATCC BAA-946 / MGAS10394).